The chain runs to 511 residues: Probable mannosyl-oligosaccharide alpha-1,2-mannosidase 1B (511 aa).

Residues 1–18 form the signal peptide; the sequence is MHLPSLSLAWALAGSSLA. Residues N90 and N177 are each glycosylated (N-linked (GlcNAc...) asparagine). The cysteines at positions 327 and 356 are disulfide-linked. E370 (proton donor) is an active-site residue. N433 is a glycosylation site (N-linked (GlcNAc...) asparagine). Ca(2+) is bound at residue T501.

Belongs to the glycosyl hydrolase 47 family. As to quaternary structure, monomer. It depends on Ca(2+) as a cofactor. Mg(2+) is required as a cofactor.

It is found in the cytoplasmic vesicle lumen. It catalyses the reaction N(4)-(alpha-D-Man-(1-&gt;2)-alpha-D-Man-(1-&gt;2)-alpha-D-Man-(1-&gt;3)-[alpha-D-Man-(1-&gt;2)-alpha-D-Man-(1-&gt;3)-[alpha-D-Man-(1-&gt;2)-alpha-D-Man-(1-&gt;6)]-alpha-D-Man-(1-&gt;6)]-beta-D-Man-(1-&gt;4)-beta-D-GlcNAc-(1-&gt;4)-beta-D-GlcNAc)-L-asparaginyl-[protein] (N-glucan mannose isomer 9A1,2,3B1,2,3) + 4 H2O = N(4)-(alpha-D-Man-(1-&gt;3)-[alpha-D-Man-(1-&gt;3)-[alpha-D-Man-(1-&gt;6)]-alpha-D-Man-(1-&gt;6)]-beta-D-Man-(1-&gt;4)-beta-D-GlcNAc-(1-&gt;4)-beta-D-GlcNAc)-L-asparaginyl-[protein] (N-glucan mannose isomer 5A1,2) + 4 beta-D-mannose. It carries out the reaction N(4)-(alpha-D-Man-(1-&gt;2)-alpha-D-Man-(1-&gt;2)-alpha-D-Man-(1-&gt;3)-[alpha-D-Man-(1-&gt;3)-[alpha-D-Man-(1-&gt;2)-alpha-D-Man-(1-&gt;6)]-alpha-D-Man-(1-&gt;6)]-beta-D-Man-(1-&gt;4)-beta-D-GlcNAc-(1-&gt;4)-beta-D-GlcNAc)-L-asparaginyl-[protein] (N-glucan mannose isomer 8A1,2,3B1,3) + 3 H2O = N(4)-(alpha-D-Man-(1-&gt;3)-[alpha-D-Man-(1-&gt;3)-[alpha-D-Man-(1-&gt;6)]-alpha-D-Man-(1-&gt;6)]-beta-D-Man-(1-&gt;4)-beta-D-GlcNAc-(1-&gt;4)-beta-D-GlcNAc)-L-asparaginyl-[protein] (N-glucan mannose isomer 5A1,2) + 3 beta-D-mannose. Its pathway is protein modification; protein glycosylation. Functionally, involved in the maturation of Asn-linked oligosaccharides. Progressively trims alpha-1,2-linked mannose residues from Man(9)GlcNAc(2) to produce Man(5)GlcNAc(2). The protein is Probable mannosyl-oligosaccharide alpha-1,2-mannosidase 1B (mns1B) of Aspergillus clavatus (strain ATCC 1007 / CBS 513.65 / DSM 816 / NCTC 3887 / NRRL 1 / QM 1276 / 107).